A 326-amino-acid chain; its full sequence is UDP-N-acetylglucosamine transporter (326 aa).

The next 8 membrane-spanning stretches (helical) occupy residues Asn-4–Met-24, Leu-38–Val-58, Leu-136–Trp-156, Phe-174–Phe-194, Leu-212–Val-232, Gln-243–Ile-263, Ile-269–Trp-289, and Phe-293–Tyr-313.

It belongs to the nucleotide-sugar transporter family. SLC35A subfamily. In terms of assembly, interacts with SLC35A2; the interaction is reduced in the presence of SLC35A4. Found in a complex with SLC35A2 and SLC35A4. Interacts with MGAT4B. Post-translationally, O-Glcnacylation regulates the stability of SLC35A3 and the specific complex formation with MGAT4B.

It localises to the golgi apparatus membrane. It carries out the reaction UMP(out) + UDP-N-acetyl-alpha-D-glucosamine(in) = UMP(in) + UDP-N-acetyl-alpha-D-glucosamine(out). Functionally, transports diphosphate-N-acetylglucosamine (UDP-GlcNAc) from the cytosol into the lumen of the Golgi apparatus, functioning as an antiporter that exchanges UDP-N-acetyl-alpha-D-glucosamine for UMP. May supply UDP-GlcNAc as substrate for Golgi-resident glycosyltransferases that generate highly branched, multiantennary complex N-glycans and keratan sulfate. However, the exact role of SLC35A3 still needs to be elucidated, it could be a member of a catalytically more efficient multiprotein complex rather than function independently as a single transporter. The chain is UDP-N-acetylglucosamine transporter (Slc35a3) from Mus musculus (Mouse).